A 170-amino-acid polypeptide reads, in one-letter code: Ribosome maturation factor RimM (170 aa).

One can recognise a PRC barrel domain in the interval 97 to 170 (HPDEYYWVDL…RIVVDWDPEF (74 aa)).

Belongs to the RimM family. In terms of assembly, binds ribosomal protein uS19.

Its subcellular location is the cytoplasm. Functionally, an accessory protein needed during the final step in the assembly of 30S ribosomal subunit, possibly for assembly of the head region. Essential for efficient processing of 16S rRNA. May be needed both before and after RbfA during the maturation of 16S rRNA. It has affinity for free ribosomal 30S subunits but not for 70S ribosomes. In Xylella fastidiosa (strain M12), this protein is Ribosome maturation factor RimM.